The chain runs to 416 residues: Serine protease inhibitor A3K (416 aa).

A signal peptide spans 1-20 (MAFIAALGLLMAGICPAVLC). Asn-102, Asn-182, Asn-220, and Asn-267 each carry an N-linked (GlcNAc...) asparagine glycan. Positions 365–392 (GTEGAAATAVTAALKSLPQTIPLLNFNR) are RCL.

The protein belongs to the serpin family. N-glycosylated. In terms of tissue distribution, liver and plasma.

The protein localises to the secreted. Binds to and inhibits kallikreins. Inhibits trypsin but not chymotrypsin or elastase. The polypeptide is Serine protease inhibitor A3K (Serpina3k) (Rattus norvegicus (Rat)).